Consider the following 318-residue polypeptide: Very-long-chain 3-oxoacyl-CoA reductase-B (318 aa).

A helical membrane pass occupies residues 15–35 (FWYLGVVAATWWGLRAAWCLL). 54-83 (GKWAVVTGATDGIGKAYAEELARRGMNIVL) contributes to the NADP(+) binding site. 2 helical membrane-spanning segments follow: residues 187-207 (GVVLNISSASGMYPVPLLTVY) and 281-301 (AITGWISTSLVPVSAAISMGM). Serine 194 lines the substrate pocket. Tyrosine 207 serves as the catalytic Proton acceptor.

The protein belongs to the short-chain dehydrogenases/reductases (SDR) family. 17-beta-HSD 3 subfamily.

The protein resides in the endoplasmic reticulum membrane. It carries out the reaction a very-long-chain (3R)-3-hydroxyacyl-CoA + NADP(+) = a very-long-chain 3-oxoacyl-CoA + NADPH + H(+). The catalysed reaction is 17beta-estradiol + NAD(+) = estrone + NADH + H(+). The enzyme catalyses 17beta-estradiol + NADP(+) = estrone + NADPH + H(+). It participates in lipid metabolism; fatty acid biosynthesis. It functions in the pathway steroid biosynthesis; estrogen biosynthesis. In terms of biological role, catalyzes the second of the four reactions of the long-chain fatty acids elongation cycle. This endoplasmic reticulum-bound enzymatic process, allows the addition of two carbons to the chain of long- and very long-chain fatty acids/VLCFAs per cycle. This enzyme has a 3-ketoacyl-CoA reductase activity, reducing 3-ketoacyl-CoA to 3-hydroxyacyl-CoA, within each cycle of fatty acid elongation. Thereby, it may participate in the production of VLCFAs of different chain lengths that are involved in multiple biological processes as precursors of membrane lipids and lipid mediators. May also catalyze the transformation of estrone (E1) into estradiol (E2) and play a role in estrogen formation. The protein is Very-long-chain 3-oxoacyl-CoA reductase-B (hsd17b12-b) of Xenopus laevis (African clawed frog).